A 136-amino-acid chain; its full sequence is Holo-[acyl-carrier-protein] synthase (136 aa).

Asp8 and Glu57 together coordinate Mg(2+).

It belongs to the P-Pant transferase superfamily. AcpS family. Mg(2+) serves as cofactor.

The protein localises to the cytoplasm. The catalysed reaction is apo-[ACP] + CoA = holo-[ACP] + adenosine 3',5'-bisphosphate + H(+). In terms of biological role, transfers the 4'-phosphopantetheine moiety from coenzyme A to a Ser of acyl-carrier-protein. This chain is Holo-[acyl-carrier-protein] synthase, found in Methylorubrum extorquens (strain PA1) (Methylobacterium extorquens).